The chain runs to 423 residues: Glutamyl-tRNA reductase (423 aa).

Residues T49–R52, S109, E114–Q116, and Q120 contribute to the substrate site. Catalysis depends on C50, which acts as the Nucleophile. G189 to G194 provides a ligand contact to NADP(+).

It belongs to the glutamyl-tRNA reductase family. Homodimer.

The catalysed reaction is (S)-4-amino-5-oxopentanoate + tRNA(Glu) + NADP(+) = L-glutamyl-tRNA(Glu) + NADPH + H(+). Its pathway is porphyrin-containing compound metabolism; protoporphyrin-IX biosynthesis; 5-aminolevulinate from L-glutamyl-tRNA(Glu): step 1/2. It functions in the pathway porphyrin-containing compound metabolism; chlorophyll biosynthesis. Functionally, catalyzes the NADPH-dependent reduction of glutamyl-tRNA(Glu) to glutamate 1-semialdehyde (GSA). The protein is Glutamyl-tRNA reductase of Chlorobium limicola (strain DSM 245 / NBRC 103803 / 6330).